The sequence spans 409 residues: Failed axon connections homolog (409 aa).

Residues 68–88 (YLTGGALLAAAAYLLHELLVI) form a helical membrane-spanning segment. The disordered stretch occupies residues 372 to 409 (DEGAENSFSRTPDTDFTGHSLFDSDVDMDDYTEHEQCK).

Belongs to the FAX family.

The protein resides in the membrane. May play a role in axonal development. The polypeptide is Failed axon connections homolog (Faxc) (Rattus norvegicus (Rat)).